A 446-amino-acid polypeptide reads, in one-letter code: Trigger factor (446 aa).

The 86-residue stretch at Gly163–Leu248 folds into the PPIase FKBP-type domain.

Belongs to the FKBP-type PPIase family. Tig subfamily.

The protein resides in the cytoplasm. It carries out the reaction [protein]-peptidylproline (omega=180) = [protein]-peptidylproline (omega=0). In terms of biological role, involved in protein export. Acts as a chaperone by maintaining the newly synthesized protein in an open conformation. Functions as a peptidyl-prolyl cis-trans isomerase. The sequence is that of Trigger factor from Natranaerobius thermophilus (strain ATCC BAA-1301 / DSM 18059 / JW/NM-WN-LF).